A 2206-amino-acid chain; its full sequence is Genome polyprotein (2206 aa).

Glycine 2 carries N-myristoyl glycine; by host lipidation. At glycine 2 to glutamine 1517 the chain is on the cytoplasmic side. Amphipathic alpha-helix stretches follow at residues glycine 579–glutamine 599 and glycine 579–leucine 603. Active-site for protease 2A activity residues include histidine 898 and aspartate 916. The Zn(2+) site is built by cysteine 933 and cysteine 935. Cysteine 987 acts as the For protease 2A activity in catalysis. Zn(2+)-binding residues include cysteine 993 and histidine 995. Residues glycine 1125–glutamine 1197 are membrane-binding. The segment at glycine 1125–threonine 1263 is oligomerization. The segment at serine 1146–serine 1150 is RNA-binding. Positions glutamate 1229–asparagine 1385 constitute an SF3 helicase domain. Position 1253–1260 (glycine 1253–serine 1260) interacts with ATP. 4 residues coordinate Zn(2+): cysteine 1393, cysteine 1396, cysteine 1405, and cysteine 1410. The C4-type zinc-finger motif lies at cysteine 1393–cysteine 1410. Residues glutamate 1437 to isoleucine 1444 form an RNA-binding region. The interval methionine 1448–glutamine 1453 is oligomerization. An intramembrane segment occupies alanine 1518–tyrosine 1533. Residues lysine 1534–phenylalanine 2206 are Cytoplasmic-facing. An O-(5'-phospho-RNA)-tyrosine modification is found at tyrosine 1543. A Peptidase C3 domain is found at glycine 1563–phenylalanine 1741. Active-site for protease 3C activity residues include histidine 1602, glutamate 1633, and cysteine 1709. The region spanning glutamate 1972–leucine 2087 is the RdRp catalytic domain. Mg(2+)-binding residues include aspartate 1978 and aspartate 2073.

The protein belongs to the picornaviruses polyprotein family. Interacts with capsid protein VP1 and capsid protein VP3 to form heterotrimeric protomers. In terms of assembly, interacts with capsid protein VP0, and capsid protein VP3 to form heterotrimeric protomers. Interacts with human PVR. Five protomers subsequently associate to form pentamers which serve as building blocks for the capsid. Interacts with capsid protein VP2, capsid protein VP3 and capsid protein VP4 following cleavage of capsid protein VP0. As to quaternary structure, interacts with capsid protein VP1 and capsid protein VP3 in the mature capsid. Interacts with capsid protein VP0 and capsid protein VP1 to form heterotrimeric protomers. Five protomers subsequently associate to form pentamers which serve as building blocks for the capsid. Interacts with capsid protein VP4 in the mature capsid. Interacts with protein 2C; this interaction may be important for virion morphogenesis. In terms of assembly, interacts with capsid protein VP1 and capsid protein VP3. As to quaternary structure, homodimer. Homohexamer; forms a hexameric ring structure with 6-fold symmetry characteristic of AAA+ ATPases. Interacts (via N-terminus) with host RTN3 (via reticulon domain); this interaction is important for viral replication. Interacts with capsid protein VP3; this interaction may be important for virion morphogenesis. In terms of assembly, interacts with protein 3CD. As to quaternary structure, homodimer. Interacts with host GBF1. Interacts (via GOLD domain) with host ACBD3 (via GOLD domain); this interaction allows the formation of a viral protein 3A/ACBD3 heterotetramer with a 2:2 stoichiometry, which will stimulate the recruitment of host PI4KB in order to synthesize PI4P at the viral RNA replication sites. Interacts with RNA-directed RNA polymerase. In terms of assembly, interacts with protein 3AB and with RNA-directed RNA polymerase. As to quaternary structure, interacts with Viral protein genome-linked and with protein 3CD. It depends on Mg(2+) as a cofactor. Post-translationally, specific enzymatic cleavages in vivo by the viral proteases yield processing intermediates and the mature proteins. Myristoylation is required for the formation of pentamers during virus assembly. Further assembly of 12 pentamers and a molecule of genomic RNA generates the provirion. In terms of processing, during virion maturation, immature virions are rendered infectious following cleavage of VP0 into VP4 and VP2. This maturation seems to be an autocatalytic event triggered by the presence of RNA in the capsid and it is followed by a conformational change infectious virion. Post-translationally, myristoylation is required during RNA encapsidation and formation of the mature virus particle. VPg is uridylylated by the polymerase into VPg-pUpU. This acts as a nucleotide-peptide primer for the genomic RNA replication.

The protein localises to the virion. The protein resides in the host cytoplasm. It localises to the host cytoplasmic vesicle membrane. Its subcellular location is the host nucleus. The enzyme catalyses a ribonucleoside 5'-triphosphate + H2O = a ribonucleoside 5'-diphosphate + phosphate + H(+). It carries out the reaction Selective cleavage of Tyr-|-Gly bond in the picornavirus polyprotein.. The catalysed reaction is RNA(n) + a ribonucleoside 5'-triphosphate = RNA(n+1) + diphosphate. It catalyses the reaction Selective cleavage of Gln-|-Gly bond in the poliovirus polyprotein. In other picornavirus reactions Glu may be substituted for Gln, and Ser or Thr for Gly.. Replication or transcription is subject to high level of random mutations by the nucleotide analog ribavirin. Its function is as follows. Forms an icosahedral capsid of pseudo T=3 symmetry with capsid proteins VP2 and VP3. The capsid is 300 Angstroms in diameter, composed of 60 copies of each capsid protein and enclosing the viral positive strand RNA genome. Capsid protein VP1 mainly forms the vertices of the capsid. Capsid protein VP1 interacts with host cell receptor PVR to provide virion attachment to target host cells. This attachment induces virion internalization predominantly through clathrin- and caveolin-independent endocytosis in Hela cells and through caveolin-mediated endocytosis in brain microvascular endothelial cells. Tyrosine kinases are probably involved in the entry process. Virus binding to PVR induces increased junctional permeability and rearrangement of junctional proteins. Modulation of endothelial tight junctions, as well as cytolytic infection of endothelial cells themselves, may result in loss of endothelial integrity which may help the virus to reach the CNS. After binding to its receptor, the capsid undergoes conformational changes. Capsid protein VP1 N-terminus (that contains an amphipathic alpha-helix) and capsid protein VP4 are externalized. Together, they shape a pore in the host membrane through which viral genome is translocated to host cell cytoplasm. Forms an icosahedral capsid of pseudo T=3 symmetry with capsid proteins VP2 and VP3. The capsid is 300 Angstroms in diameter, composed of 60 copies of each capsid protein and enclosing the viral positive strand RNA genome. Functionally, lies on the inner surface of the capsid shell. After binding to the host receptor, the capsid undergoes conformational changes. Capsid protein VP4 is released, Capsid protein VP1 N-terminus is externalized, and together, they shape a pore in the host membrane through which the viral genome is translocated into the host cell cytoplasm. In terms of biological role, component of immature procapsids, which is cleaved into capsid proteins VP4 and VP2 after maturation. Allows the capsid to remain inactive before the maturation step. Its function is as follows. Cysteine protease that cleaves viral polyprotein and specific host proteins. It is responsible for the autocatalytic cleavage between the P1 and P2 regions, which is the first cleavage occurring in the polyprotein. Also cleaves the host translation initiation factor EIF4G1, in order to shut down the capped cellular mRNA translation. Inhibits the host nucleus-cytoplasm protein and RNA trafficking by cleaving host members of the nuclear pores including NUP98, NUP62 and NUP153. Counteracts stress granule formation probably by antagonizing its assembly or promoting its dissassembly. Cleaves and inhibits host IFIH1/MDA5, thereby inhibiting the type-I IFN production and the establishment of the antiviral state. Cleaves and inhibits host MAVS, thereby inhibiting the type-I IFN production and the establishment of the antiviral state. Plays an essential role in the virus replication cycle by acting as a viroporin. Creates a pore in the host endoplasmic reticulum and as a consequence releases Ca2+ in the cytoplasm of infected cell. In turn, high levels of cytoplasmic calcium may trigger membrane trafficking and transport of viral ER-associated proteins to viroplasms, sites of viral genome replication. Functionally, induces and associates with structural rearrangements of intracellular membranes. Displays RNA-binding, nucleotide binding and NTPase activities. May play a role in virion morphogenesis and viral RNA encapsidation by interacting with the capsid protein VP3. In terms of biological role, localizes the viral replication complex to the surface of membranous vesicles. Together with protein 3CD binds the Cis-Active RNA Element (CRE) which is involved in RNA synthesis initiation. Acts as a cofactor to stimulate the activity of 3D polymerase, maybe through a nucleid acid chaperone activity. Its function is as follows. Localizes the viral replication complex to the surface of membranous vesicles. It inhibits host cell endoplasmic reticulum-to-Golgi apparatus transport and causes the disassembly of the Golgi complex, possibly through GBF1 interaction. This would result in depletion of MHC, trail receptors and IFN receptors at the host cell surface. Plays an essential role in viral RNA replication by recruiting ACBD3 and PI4KB at the viral replication sites, thereby allowing the formation of the rearranged membranous structures where viral replication takes place. Acts as a primer for viral RNA replication and remains covalently bound to viral genomic RNA. VPg is uridylylated prior to priming replication into VPg-pUpU. The oriI viral genomic sequence may act as a template for this. The VPg-pUpU is then used as primer on the genomic RNA poly(A) by the RNA-dependent RNA polymerase to replicate the viral genome. During genome replication, the VPg-RNA linkage is removed by the host TDP2, thereby accelerating replication. During the late stage of the replication cycle, host TDP2 is excluded from sites of viral RNA synthesis and encapsidation, allowing for the generation of progeny virions. Functionally, involved in the viral replication complex and viral polypeptide maturation. It exhibits protease activity with a specificity and catalytic efficiency that is different from protease 3C. Protein 3CD lacks polymerase activity. Protein 3CD binds to the 5'UTR of the viral genome. In terms of biological role, major viral protease that mediates proteolytic processing of the polyprotein. Cleaves host EIF5B, contributing to host translation shutoff. Also cleaves host PABPC1, contributing to host translation shutoff. Cleaves host RIGI and thus contributes to the inhibition of type I interferon production. Cleaves host NLRP1, triggers host N-glycine-mediated degradation of the autoinhibitory NLRP1 N-terminal fragment. Inhibits the integrated stress response (ISR) in the infected cell by cleaving host G3BP1. Stress granule formation is thus inhibited, which allows protein synthesis and viral replication. Its function is as follows. Replicates the viral genomic RNA on the surface of intracellular membranes. May form linear arrays of subunits that propagate along a strong head-to-tail interaction called interface-I. Covalently attaches UMP to a tyrosine of VPg, which is used to prime RNA synthesis. The positive stranded RNA genome is first replicated at virus induced membranous vesicles, creating a dsRNA genomic replication form. This dsRNA is then used as template to synthesize positive stranded RNA genomes. ss(+)RNA genomes are either translated, replicated or encapsidated. This Poliovirus type 3 (strains P3/Leon/37 and P3/Leon 12A[1]B) protein is Genome polyprotein.